The chain runs to 302 residues: MALLIAGPTASGKSALALRLAETCNGVVINTDSMQLYRDLHVLTARPTQEEEHQAPHVLFGSVDGRINYSVALWLDQARIALDEAQGQGRMPIFVGGTGLYFKALTQGLSDIPSVPDSIRADLRRHAEGCSTPELHRELAARDPEMAARLKPNDSQRILRALEVFVATGQSLAAFQNARSAPLLTMSEVLAVFLAPDRADLNRRIDRRFDTMLEQGALQEVERLGARGLDPSLPVMRAHGVPHLLRALRGEISLAEAADRGKLDTRHYAKRQFTFARHQLPDFAWRTPEEAETFFLSKLQRM.

ATP is bound at residue 7-14 (GPTASGKS). Substrate is bound at residue 9–14 (TASGKS). 2 interaction with substrate tRNA regions span residues 32–35 (DSMQ) and 156–160 (QRILR).

This sequence belongs to the IPP transferase family. Monomer. The cofactor is Mg(2+).

It carries out the reaction adenosine(37) in tRNA + dimethylallyl diphosphate = N(6)-dimethylallyladenosine(37) in tRNA + diphosphate. Functionally, catalyzes the transfer of a dimethylallyl group onto the adenine at position 37 in tRNAs that read codons beginning with uridine, leading to the formation of N6-(dimethylallyl)adenosine (i(6)A). This chain is tRNA dimethylallyltransferase, found in Beijerinckia indica subsp. indica (strain ATCC 9039 / DSM 1715 / NCIMB 8712).